The primary structure comprises 327 residues: tRNA dimethylallyltransferase (327 aa).

14–21 (GPTASGKT) lines the ATP pocket. 16 to 21 (TASGKT) provides a ligand contact to substrate. Interaction with substrate tRNA regions lie at residues 39 to 42 (DSAL) and 163 to 167 (QRIQR).

Belongs to the IPP transferase family. In terms of assembly, monomer. Mg(2+) is required as a cofactor.

It catalyses the reaction adenosine(37) in tRNA + dimethylallyl diphosphate = N(6)-dimethylallyladenosine(37) in tRNA + diphosphate. Catalyzes the transfer of a dimethylallyl group onto the adenine at position 37 in tRNAs that read codons beginning with uridine, leading to the formation of N6-(dimethylallyl)adenosine (i(6)A). The protein is tRNA dimethylallyltransferase of Xanthomonas oryzae pv. oryzae (strain MAFF 311018).